The primary structure comprises 79 residues: uncharacterized protein (79 aa).

A compositionally biased stretch (low complexity) spans 22 to 72 (NNNNNNNNNNNNNNNNNNNNNNNNNNNNNNNNNNNNNNNNNNNNNNNNNNN). The tract at residues 22–79 (NNNNNNNNNNNNNNNNNNNNNNNNNNNNNNNNNNNNNNNNNNNNNNNNNNNKRFFFFG) is disordered.

This is an uncharacterized protein from Dictyostelium discoideum (Social amoeba).